A 398-amino-acid polypeptide reads, in one-letter code: Cell division protein FtsZ (398 aa).

Residues 24–28, 111–113, glutamate 154, arginine 158, and aspartate 202 each bind GTP; these read GAGGN and GTG. The interval 333–381 is disordered; sequence GRNNKSETSPISQSEDSEKEKFKWPYSQSESTQDKTLETKPAEQVSEGA. Positions 364–373 are enriched in basic and acidic residues; sequence TQDKTLETKP.

The protein belongs to the FtsZ family. Homodimer. Polymerizes to form a dynamic ring structure in a strictly GTP-dependent manner. Interacts directly with several other division proteins.

The protein resides in the cytoplasm. In terms of biological role, essential cell division protein that forms a contractile ring structure (Z ring) at the future cell division site. The regulation of the ring assembly controls the timing and the location of cell division. One of the functions of the FtsZ ring is to recruit other cell division proteins to the septum to produce a new cell wall between the dividing cells. Binds GTP and shows GTPase activity. This is Cell division protein FtsZ from Wolbachia sp.